The following is a 29-amino-acid chain: XKNGYAVDSSGKAPECILSNYCNNECTKV.

The protein belongs to the long (4 C-C) scorpion toxin superfamily. Sodium channel inhibitor family. Beta subfamily. In terms of tissue distribution, expressed by the venom gland.

It is found in the secreted. Its function is as follows. Excitatory insect beta-toxins induce a spastic paralysis. They bind voltage-independently at site-4 of sodium channels (Nav) and shift the voltage of activation toward more negative potentials thereby affecting sodium channel activation and promoting spontaneous and repetitive firing. The fraction to which this protein belongs exhibits low toxicity and induces transient paralysis in all insects tested (the crickets A.domesticus). The polypeptide is Toxin Bl-4 (Buthacus leptochelys (Egyptian fat-tailed scorpion)).